A 250-amino-acid polypeptide reads, in one-letter code: MGRAPAKRKPSSPPPPPPPGRCHFWLPNKRRHCANTPLPTSQYCGNHLPDSASDAGAPFRRLVPCPVDPSHTVLEENLEAHVGKCPLKKQAAALAAQPFYSKGINSGGGEGGGGVTSAAKRALVHKLTKDELRALIEKIKLAHASAAMAMRDSFLVTDACDNWMRNQVDRKVPYQEKHVTQQASIIGNMEAFGLLQKGGEVAEENGVKNAPAVVEFGAGRGYLTQMLADCYGIRNVFLVERRSYKLKLKI.

Basic residues predominate over residues 1–10 (MGRAPAKRKP). The tract at residues 1 to 20 (MGRAPAKRKPSSPPPPPPPG) is disordered. The segment covering 11–20 (SSPPPPPPPG) has biased composition (pro residues). A CHHC U11-48K-type zinc finger spans residues 62-89 (LVPCPVDPSHTVLEENLEAHVGKCPLKK). Positions 65, 71, 81, and 85 each coordinate Zn(2+).

This sequence belongs to the methyltransferase TRM13 family.

It localises to the nucleus. Its subcellular location is the cytoplasm. It carries out the reaction cytidine(4) in tRNA(Pro) + S-adenosyl-L-methionine = 2'-O-methylcytidine(4) in tRNA(Pro) + S-adenosyl-L-homocysteine + H(+). It catalyses the reaction cytidine(4) in tRNA(Gly)(GCC) + S-adenosyl-L-methionine = 2'-O-methylcytidine(4) in tRNA(Gly)(GCC) + S-adenosyl-L-homocysteine + H(+). The enzyme catalyses adenosine(4) in tRNA(His) + S-adenosyl-L-methionine = 2'-O-methyladenosine(4) in tRNA(His) + S-adenosyl-L-homocysteine + H(+). TRNA methylase that catalyzes 2'-O-methyladenosine (Am) nucleoside formation on tRNA(Gly)(GCC) in vitro. May 2'-O-methylate cytidine(4) in tRNA(Pro) and tRNA(Gly)(GCC), and adenosine(4) in tRNA(His). Involved in salt stress tolerance. This Oryza sativa subsp. japonica (Rice) protein is tRNA:m(4)X modification enzyme TRM13.